We begin with the raw amino-acid sequence, 350 residues long: Hydroxymethylglutaryl-CoA synthase (350 aa).

The Proton donor/acceptor role is filled by glutamate 83. Catalysis depends on cysteine 115, which acts as the Acyl-thioester intermediate. (3S)-3-hydroxy-3-methylglutaryl-CoA-binding residues include cysteine 115 and threonine 156. Residue arginine 204 participates in CoA binding. The (3S)-3-hydroxy-3-methylglutaryl-CoA site is built by threonine 206 and histidine 239. Histidine 239 serves as the catalytic Proton donor/acceptor. Lysine 244 contacts CoA. The (3S)-3-hydroxy-3-methylglutaryl-CoA site is built by asparagine 271 and serine 301.

The protein belongs to the thiolase-like superfamily. Archaeal HMG-CoA synthase family. As to quaternary structure, interacts with acetoacetyl-CoA thiolase that catalyzes the precedent step in the pathway and with a DUF35 protein. The acetoacetyl-CoA thiolase/HMG-CoA synthase complex channels the intermediate via a fused CoA-binding site, which allows for efficient coupling of the endergonic thiolase reaction with the exergonic HMGCS reaction.

It catalyses the reaction acetoacetyl-CoA + acetyl-CoA + H2O = (3S)-3-hydroxy-3-methylglutaryl-CoA + CoA + H(+). It functions in the pathway metabolic intermediate biosynthesis; (R)-mevalonate biosynthesis; (R)-mevalonate from acetyl-CoA: step 2/3. Functionally, catalyzes the condensation of acetyl-CoA with acetoacetyl-CoA to form 3-hydroxy-3-methylglutaryl-CoA (HMG-CoA). Functions in the mevalonate (MVA) pathway leading to isopentenyl diphosphate (IPP), a key precursor for the biosynthesis of isoprenoid compounds that are building blocks of archaeal membrane lipids. The sequence is that of Hydroxymethylglutaryl-CoA synthase from Thermococcus onnurineus (strain NA1).